The following is a 162-amino-acid chain: Interleukin-15 (162 aa).

An N-terminal signal peptide occupies residues 1-29; sequence MRILKPYLRSTSIQCYLCLLLNSHFLTEA. The propeptide occupies 30-48; the sequence is GIHVFILGCISASLPKTEA. Intrachain disulfides connect cysteine 83-cysteine 133 and cysteine 90-cysteine 136. Residues asparagine 104, asparagine 113, asparagine 121, and asparagine 127 are each glycosylated (N-linked (GlcNAc...) asparagine).

It belongs to the IL-15/IL-21 family.

Its subcellular location is the secreted. Functionally, cytokine that plays a major role in the development of inflammatory and protective immune responses to microbial invaders and parasites by modulating immune cells of both the innate and adaptive immune systems. Stimulates the proliferation of natural killer cells, T-cells and B-cells and promotes the secretion of several cytokines. In monocytes, induces the production of IL8 and monocyte chemotactic protein 1/CCL2, two chemokines that attract neutrophils and monocytes respectively to sites of infection. Unlike most cytokines, which are secreted in soluble form, IL15 is expressed in association with its high affinity IL15RA on the surface of IL15-producing cells and delivers signals to target cells that express IL2RB and IL2RG receptor subunits. Binding to its receptor triggers the phosphorylation of JAK1 and JAK3 and the recruitment and subsequent phosphorylation of signal transducer and activator of transcription-3/STAT3 and STAT5. In mast cells, induces the rapid tyrosine phosphorylation of STAT6 and thereby controls mast cell survival and release of cytokines such as IL4. The polypeptide is Interleukin-15 (IL15) (Bos taurus (Bovine)).